The sequence spans 267 residues: Coiled-coil domain-containing protein 90B, mitochondrial (267 aa).

The transit peptide at 1-47 (MKGSQLYRHLSLQGNRLHLHLFQGKKLQLHPSQGHKGTAHRTWKKGF) directs the protein to the mitochondrion. A coiled-coil region spans residues 142-175 (LEKSEFATLRAENEKMKIELEHVRQHLLNETNRI). A helical transmembrane segment spans residues 244–266 (TVRYMAASVFTCLAIALGFYRLW).

It belongs to the CCDC90 family.

The protein resides in the mitochondrion membrane. This is Coiled-coil domain-containing protein 90B, mitochondrial (ccdc90b) from Xenopus tropicalis (Western clawed frog).